The chain runs to 330 residues: D-cysteine desulfhydrase (330 aa).

Lys52 is subject to N6-(pyridoxal phosphate)lysine.

Belongs to the ACC deaminase/D-cysteine desulfhydrase family. As to quaternary structure, homodimer. It depends on pyridoxal 5'-phosphate as a cofactor.

It catalyses the reaction D-cysteine + H2O = hydrogen sulfide + pyruvate + NH4(+) + H(+). Catalyzes the alpha,beta-elimination reaction of D-cysteine and of several D-cysteine derivatives. It could be a defense mechanism against D-cysteine. The sequence is that of D-cysteine desulfhydrase from Serratia proteamaculans (strain 568).